A 230-amino-acid polypeptide reads, in one-letter code: Ribosomal RNA small subunit methyltransferase G (230 aa).

S-adenosyl-L-methionine contacts are provided by residues Gly93, Leu98, Ile144–Glu145, and Arg158.

It belongs to the methyltransferase superfamily. RNA methyltransferase RsmG family.

It localises to the cytoplasm. It carries out the reaction guanosine(527) in 16S rRNA + S-adenosyl-L-methionine = N(7)-methylguanosine(527) in 16S rRNA + S-adenosyl-L-homocysteine. Specifically methylates the N7 position of guanine in position 527 of 16S rRNA. In Bordetella parapertussis (strain 12822 / ATCC BAA-587 / NCTC 13253), this protein is Ribosomal RNA small subunit methyltransferase G.